We begin with the raw amino-acid sequence, 197 residues long: Imidazoleglycerol-phosphate dehydratase (197 aa).

Belongs to the imidazoleglycerol-phosphate dehydratase family.

Its subcellular location is the cytoplasm. It carries out the reaction D-erythro-1-(imidazol-4-yl)glycerol 3-phosphate = 3-(imidazol-4-yl)-2-oxopropyl phosphate + H2O. Its pathway is amino-acid biosynthesis; L-histidine biosynthesis; L-histidine from 5-phospho-alpha-D-ribose 1-diphosphate: step 6/9. This chain is Imidazoleglycerol-phosphate dehydratase, found in Laribacter hongkongensis (strain HLHK9).